Consider the following 98-residue polypeptide: Ferredoxin-like protein (98 aa).

Residues 57-87 (GQVEVTADGCMECGTCRVLCEANGDVEWSYP) form the 4Fe-4S ferredoxin-type domain.

This sequence to ferredoxins from P.putida and C.tartarivorum, ferredoxin I from A.vinelandii, ferredoxin II from D.desulfuricans.

Functionally, could be a 3Fe-4S cluster-containing protein. This is Ferredoxin-like protein (fixX) from Rhizobium meliloti (strain 1021) (Ensifer meliloti).